The primary structure comprises 398 residues: Elongation factor Tu (398 aa).

One can recognise a tr-type G domain in the interval Lys10–Glu207. The interval Gly19–Thr26 is G1. Residue Gly19–Thr26 participates in GTP binding. Residue Thr26 coordinates Mg(2+). Residues Gly63 to Asn67 are G2. The interval Asp84–Gly87 is G3. GTP contacts are provided by residues Asp84 to His88 and Asn139 to Asp142. The tract at residues Asn139–Asp142 is G4. The interval Ser177–Leu179 is G5.

This sequence belongs to the TRAFAC class translation factor GTPase superfamily. Classic translation factor GTPase family. EF-Tu/EF-1A subfamily. In terms of assembly, monomer.

It is found in the cytoplasm. It carries out the reaction GTP + H2O = GDP + phosphate + H(+). GTP hydrolase that promotes the GTP-dependent binding of aminoacyl-tRNA to the A-site of ribosomes during protein biosynthesis. The chain is Elongation factor Tu from Streptococcus mutans serotype c (strain ATCC 700610 / UA159).